A 298-amino-acid polypeptide reads, in one-letter code: Cytosolic Fe-S cluster assembly factor CFD1 (298 aa).

25–32 (GKGGVGKS) contacts ATP. [4Fe-4S] cluster is bound by residues Cys215 and Cys218.

Belongs to the Mrp/NBP35 ATP-binding proteins family. NUBP2/CFD1 subfamily. Heterotetramer of 2 NBP35 and 2 CFD1 chains. Requires [4Fe-4S] cluster as cofactor.

The protein resides in the cytoplasm. Component of the cytosolic iron-sulfur (Fe/S) protein assembly (CIA) machinery. Required for maturation of extramitochondrial Fe-S proteins. The NBP35-CFD1 heterotetramer forms a Fe-S scaffold complex, mediating the de novo assembly of an Fe-S cluster and its transfer to target apoproteins. Required for biogenesis and export of both ribosomal subunits, which may reflect a role in assembly of the Fe/S clusters in RLI1, a protein which performs rRNA processing and ribosome export. The protein is Cytosolic Fe-S cluster assembly factor CFD1 of Debaryomyces hansenii (strain ATCC 36239 / CBS 767 / BCRC 21394 / JCM 1990 / NBRC 0083 / IGC 2968) (Yeast).